A 259-amino-acid polypeptide reads, in one-letter code: 5'-nucleotidase SurE (259 aa).

The a divalent metal cation site is built by Asp8, Asp9, Ser40, and Asn92.

Belongs to the SurE nucleotidase family. Requires a divalent metal cation as cofactor.

The protein resides in the cytoplasm. It carries out the reaction a ribonucleoside 5'-phosphate + H2O = a ribonucleoside + phosphate. Functionally, nucleotidase that shows phosphatase activity on nucleoside 5'-monophosphates. In Xanthomonas campestris pv. campestris (strain 8004), this protein is 5'-nucleotidase SurE.